Reading from the N-terminus, the 401-residue chain is Voltage-gated potassium channel subunit beta-1 (401 aa).

Positions 90, 91, 97, and 119 each coordinate NADP(+). Tyr-124 (proton donor/acceptor) is an active-site residue. 17 residues coordinate NADP(+): Asn-192, Ser-222, Arg-223, Gln-248, Trp-277, Ser-278, Pro-279, Leu-280, Ala-281, Cys-282, Lys-288, Arg-298, Gly-357, Ser-359, Gln-363, Glu-366, and Asn-367.

This sequence belongs to the shaker potassium channel beta subunit family. As to quaternary structure, homotetramer. Interaction with tetrameric potassium channel alpha subunits gives rise to a heterooctamer. Identified in potassium channel complexes containing KCNA1, KCNA2, KCNA4, KCNA5, KCNA6, KCNAB1 and KCNAB2. Part of a complex containing KCNA1, KCNA4 and LGI1; interaction with LGI1 inhibits down-regulation of KCNA1 channel activity. Interacts with the dimer formed by GNB1 and GNG2; this enhances KCNA1 binding. Interacts with SQSTM. Detected in brain, in hippocampus and striatum (at protein level). Predominantly expressed in brain. No expression found in heart, skeletal muscle or kidney. In the late embryonic and early neonatal brain, highly expressed in hippocampus, cerebral cortex, caudate putamen, colliculus and cerebellum.

Its subcellular location is the cytoplasm. The protein localises to the membrane. It localises to the cell membrane. The enzyme catalyses a primary alcohol + NADP(+) = an aldehyde + NADPH + H(+). It catalyses the reaction a secondary alcohol + NADP(+) = a ketone + NADPH + H(+). In terms of biological role, regulatory subunit of the voltage-gated potassium (Kv) Shaker channels composed of pore-forming and potassium-conducting alpha subunits and of regulatory beta subunits. The beta-1/KCNAB1 cytoplasmic subunit mediates closure of delayed rectifier potassium channels by physically obstructing the pore via its N-terminal domain and increases the speed of channel closure for other family members. Promotes the inactivation of KCNA1, KCNA2, KCNA4, KCNA5 and KCNA6 alpha subunit-containing channels. Displays nicotinamide adenine dinucleotide phosphate (NADPH)-dependent aldoketoreductase activity by catalyzing the NADPH-dependent reduction of a variety of endogenous aldehydes and ketones. The binding of NADPH is required for efficient down-regulation of potassium channel activity. Oxidation of the bound NADPH restrains N-terminal domain from blocking the channel, thereby decreasing N-type inactivation of potassium channel activity. This Mus musculus (Mouse) protein is Voltage-gated potassium channel subunit beta-1.